Reading from the N-terminus, the 291-residue chain is Ribosomal RNA small subunit methyltransferase I (291 aa).

It belongs to the methyltransferase superfamily. RsmI family.

The protein resides in the cytoplasm. It catalyses the reaction cytidine(1402) in 16S rRNA + S-adenosyl-L-methionine = 2'-O-methylcytidine(1402) in 16S rRNA + S-adenosyl-L-homocysteine + H(+). In terms of biological role, catalyzes the 2'-O-methylation of the ribose of cytidine 1402 (C1402) in 16S rRNA. The polypeptide is Ribosomal RNA small subunit methyltransferase I (Neisseria meningitidis serogroup A / serotype 4A (strain DSM 15465 / Z2491)).